A 180-amino-acid chain; its full sequence is Pyruvoyl-dependent arginine decarboxylase (180 aa).

Position 41 is a pyruvic acid (Ser) (serine 41).

This sequence belongs to the PdaD family. The cofactor is pyruvate.

It carries out the reaction L-arginine + H(+) = agmatine + CO2. This is Pyruvoyl-dependent arginine decarboxylase from Methanococcoides burtonii (strain DSM 6242 / NBRC 107633 / OCM 468 / ACE-M).